A 291-amino-acid chain; its full sequence is Small ribosomal subunit biogenesis GTPase RsgA (291 aa).

The 159-residue stretch at 63-221 (KNELKRPPVS…IADTPGFSAL (159 aa)) folds into the CP-type G domain. GTP contacts are provided by residues 112-115 (TKKD) and 164-172 (GQSGVGKST). Residues Cys-245, Cys-250, His-252, and Cys-258 each contribute to the Zn(2+) site.

It belongs to the TRAFAC class YlqF/YawG GTPase family. RsgA subfamily. In terms of assembly, monomer. Associates with 30S ribosomal subunit, binds 16S rRNA. It depends on Zn(2+) as a cofactor.

The protein localises to the cytoplasm. One of several proteins that assist in the late maturation steps of the functional core of the 30S ribosomal subunit. Helps release RbfA from mature subunits. May play a role in the assembly of ribosomal proteins into the subunit. Circularly permuted GTPase that catalyzes slow GTP hydrolysis, GTPase activity is stimulated by the 30S ribosomal subunit. The protein is Small ribosomal subunit biogenesis GTPase RsgA of Staphylococcus aureus (strain MRSA252).